The primary structure comprises 143 residues: Na(+)/H(+) antiporter subunit B (143 aa).

Helical transmembrane passes span 9-31 (LILQ…YLFL), 36-58 (APGG…LLAY), 71-93 (FIYV…FVFG), and 117-139 (ATIF…IQTI).

This sequence belongs to the CPA3 antiporters (TC 2.A.63) subunit B family. In terms of assembly, forms a heterooligomeric complex that consists of seven subunits: MrpA, MrpB, MrpC, MrpD, MrpE, MrpF and MrpG.

The protein localises to the cell membrane. Its function is as follows. Mrp complex is a Na(+)/H(+) antiporter that is considered to be the major Na(+) excretion system in B.subtilis. Has a major role in Na(+) resistance and a minor role in Na(+)- and K(+)-dependent pH homeostasis as compared to TetB. MrpA may be the actual Na(+)/H(+) antiporter, although the six other Mrp proteins are all required for Na(+)/H(+) antiport activity and Na(+) resistance. MrpA is required for initiation of sporulation when external Na(+) concentration increases. Also transports Li(+) but not K(+), Ca(2+) or Mg(2+). This chain is Na(+)/H(+) antiporter subunit B (mrpB), found in Bacillus subtilis (strain 168).